The chain runs to 78 residues: Large ribosomal subunit protein eL38 (78 aa).

This sequence belongs to the eukaryotic ribosomal protein eL38 family. In terms of assembly, component of the large ribosomal subunit. Mature ribosomes consist of a small (40S) and a large (60S) subunit. The 40S subunit contains about 32 different proteins and 1 molecule of RNA (18S). The 60S subunit contains 45 different proteins and 3 molecules of RNA (25S, 5.8S and 5S).

The protein localises to the cytoplasm. Functionally, component of the ribosome, a large ribonucleoprotein complex responsible for the synthesis of proteins in the cell. The small ribosomal subunit (SSU) binds messenger RNAs (mRNAs) and translates the encoded message by selecting cognate aminoacyl-transfer RNA (tRNA) molecules. The large subunit (LSU) contains the ribosomal catalytic site termed the peptidyl transferase center (PTC), which catalyzes the formation of peptide bonds, thereby polymerizing the amino acids delivered by tRNAs into a polypeptide chain. The nascent polypeptides leave the ribosome through a tunnel in the LSU and interact with protein factors that function in enzymatic processing, targeting, and the membrane insertion of nascent chains at the exit of the ribosomal tunnel. The protein is Large ribosomal subunit protein eL38 of Candida albicans (strain SC5314 / ATCC MYA-2876) (Yeast).